Here is a 207-residue protein sequence, read N- to C-terminus: Ribosomal RNA large subunit methyltransferase E (207 aa).

Residues G51, W53, D69, D85, and D108 each coordinate S-adenosyl-L-methionine. The Proton acceptor role is filled by K148.

The protein belongs to the class I-like SAM-binding methyltransferase superfamily. RNA methyltransferase RlmE family.

Its subcellular location is the cytoplasm. The enzyme catalyses uridine(2552) in 23S rRNA + S-adenosyl-L-methionine = 2'-O-methyluridine(2552) in 23S rRNA + S-adenosyl-L-homocysteine + H(+). Specifically methylates the uridine in position 2552 of 23S rRNA at the 2'-O position of the ribose in the fully assembled 50S ribosomal subunit. The polypeptide is Ribosomal RNA large subunit methyltransferase E (Methanospirillum hungatei JF-1 (strain ATCC 27890 / DSM 864 / NBRC 100397 / JF-1)).